Reading from the N-terminus, the 293-residue chain is 3-hydroxybutyrate-oligomer hydrolase (293 aa).

The protein belongs to the AB hydrolase superfamily.

Its subcellular location is the cytoplasm. The enzyme catalyses (3R)-hydroxybutanoate pentamer + H2O = (3R)-hydroxybutanoate tetramer + (R)-3-hydroxybutanoate + H(+). It carries out the reaction (3R)-hydroxybutanoate tetramer + H2O = (3R)-hydroxybutanoate trimer + (R)-3-hydroxybutanoate + H(+). The catalysed reaction is (3R)-hydroxybutanoate trimer + H2O = (3R)-hydroxybutanoate dimer + (R)-3-hydroxybutanoate + H(+). It catalyses the reaction (3R)-hydroxybutanoate dimer + H2O = 2 (R)-3-hydroxybutanoate + H(+). The enzyme catalyses [(3R)-hydroxybutanoate](n) + H2O = [(3R)-hydroxybutanoate](n-1) + (R)-3-hydroxybutanoate + H(+). Its function is as follows. Catalyzes the degradation of various 3-hydroxybutyrate (3HB) oligomers at a high specific activity and artificial amorphous poly(3-hydroxybutyrate) (PHB) at a lower specific activity. Hydrolyzes the 3HB pentamer most efficiently than the tetramer, trimer and dimer. Does not hydrolyze native PHB granules and semicrystalline PHB. Participates in the mobilization of PHB along with other hydrolases. This Cupriavidus necator (strain ATCC 17699 / DSM 428 / KCTC 22496 / NCIMB 10442 / H16 / Stanier 337) (Ralstonia eutropha) protein is 3-hydroxybutyrate-oligomer hydrolase.